A 193-amino-acid chain; its full sequence is MDPKEKEKMAEELNVEETKDTAEEQPQDDQAEEAAPLTHEEQLEKELEDAQAVIEEQKDKYLRLSAEFDNYRKRTMKEKAELILNGGEKSISSILPVIDDFERAIKTMETAKDVKAVKEGVELIYNKFMAVMAQNGVKVIETKDQPLDTDYHEAIAVIPAPSEEQKGKILDCVQTGYTLNDKVIRHAKVVVGE.

Residues 1-22 (MDPKEKEKMAEELNVEETKDTA) show a composition bias toward basic and acidic residues. Residues 1–45 (MDPKEKEKMAEELNVEETKDTAEEQPQDDQAEEAAPLTHEEQLEK) form a disordered region. Over residues 23–32 (EEQPQDDQAE) the composition is skewed to acidic residues.

The protein belongs to the GrpE family. As to quaternary structure, homodimer.

The protein localises to the cytoplasm. Its function is as follows. Participates actively in the response to hyperosmotic and heat shock by preventing the aggregation of stress-denatured proteins, in association with DnaK and GrpE. It is the nucleotide exchange factor for DnaK and may function as a thermosensor. Unfolded proteins bind initially to DnaJ; upon interaction with the DnaJ-bound protein, DnaK hydrolyzes its bound ATP, resulting in the formation of a stable complex. GrpE releases ADP from DnaK; ATP binding to DnaK triggers the release of the substrate protein, thus completing the reaction cycle. Several rounds of ATP-dependent interactions between DnaJ, DnaK and GrpE are required for fully efficient folding. The polypeptide is Protein GrpE (Bacteroides thetaiotaomicron (strain ATCC 29148 / DSM 2079 / JCM 5827 / CCUG 10774 / NCTC 10582 / VPI-5482 / E50)).